The chain runs to 251 residues: Malonyl-[acyl-carrier protein] O-methyltransferase (251 aa).

It belongs to the methyltransferase superfamily.

The enzyme catalyses malonyl-[ACP] + S-adenosyl-L-methionine = malonyl-[ACP] methyl ester + S-adenosyl-L-homocysteine. The protein operates within cofactor biosynthesis; biotin biosynthesis. Converts the free carboxyl group of a malonyl-thioester to its methyl ester by transfer of a methyl group from S-adenosyl-L-methionine (SAM). It allows to synthesize pimeloyl-ACP via the fatty acid synthetic pathway. The sequence is that of Malonyl-[acyl-carrier protein] O-methyltransferase from Enterobacter lignolyticus (strain SCF1).